The sequence spans 728 residues: Hepatocyte growth factor (728 aa).

The signal sequence occupies residues 1-32; sequence MMWGTKLLPVLLLQHVLLHLLLLPVTIPYAEG. Glutamine 33 carries the pyrrolidone carboxylic acid modification. Positions 38–124 constitute a PAN domain; the sequence is NTLHEFKKSA…HEFDLYENKD (87 aa). 8 disulfides stabilise this stretch: cysteine 71/cysteine 97, cysteine 75/cysteine 85, cysteine 129/cysteine 207, cysteine 150/cysteine 190, cysteine 178/cysteine 202, cysteine 212/cysteine 289, cysteine 233/cysteine 272, and cysteine 261/cysteine 284. 2 Kringle domains span residues 129–207 and 212–289; these read CIIG…IPQC and CMTC…IKMC. A glycan (N-linked (GlcNAc...) asparagine) is linked at asparagine 295. Disulfide bonds link cysteine 306–cysteine 384, cysteine 327–cysteine 366, cysteine 355–cysteine 378, cysteine 392–cysteine 470, cysteine 413–cysteine 453, cysteine 441–cysteine 465, cysteine 488–cysteine 607, cysteine 520–cysteine 536, cysteine 615–cysteine 682, cysteine 645–cysteine 661, and cysteine 672–cysteine 700. Kringle domains lie at 306–384 and 392–470; these read CIKG…IPKC and CYRG…ISRC. Asparagine 403 carries N-linked (GlcNAc...) asparagine glycosylation. Residues 496 to 724 form the Peptidase S1 domain; the sequence is VVNGIPTQTT…YAKWIHKVIL (229 aa). Asparagine 569 and asparagine 656 each carry an N-linked (GlcNAc...) asparagine glycan.

It belongs to the peptidase S1 family. Plasminogen subfamily. As to quaternary structure, dimer of an alpha chain and a beta chain linked by a disulfide bond. Interacts with SRPX2; the interaction increases HGF mitogenic activity. The single-chain precursor undergoes proteolytic processing by TMPRSS13 resulting in an active two-chain form. The single-chain precursor undergoes proteolytic processing by HGFAC resulting in an active two-chain form.

In terms of biological role, potent mitogen for mature parenchymal hepatocyte cells, seems to be a hepatotrophic factor, and acts as a growth factor for a broad spectrum of tissues and cell types. Activating ligand for the receptor tyrosine kinase MET by binding to it and promoting its dimerization. Activates MAPK signaling following TMPRSS13 cleavage and activation. The polypeptide is Hepatocyte growth factor (Hgf) (Rattus norvegicus (Rat)).